Here is a 113-residue protein sequence, read N- to C-terminus: Photosystem II reaction center Psb28 protein (113 aa).

The protein belongs to the Psb28 family. As to quaternary structure, part of the photosystem II complex.

The protein localises to the cellular thylakoid membrane. The sequence is that of Photosystem II reaction center Psb28 protein from Nostoc punctiforme (strain ATCC 29133 / PCC 73102).